Reading from the N-terminus, the 294-residue chain is Small ribosomal subunit protein uS3 (294 aa).

Residues 39-107 enclose the KH type-2 domain; that stretch reads VREYLKTKLK…PVAVNIEEVR (69 aa). Positions 210 to 294 are disordered; that stretch reads RNDLPAVETP…AAPAADVKGE (85 aa). Residues 219–238 are compositionally biased toward basic and acidic residues; that stretch reads PRPDEERRPRGPRRDGRPGG. 2 stretches are compositionally biased toward low complexity: residues 249 to 258 and 281 to 294; these read RPAAGNSAPA and VAAP…VKGE.

Belongs to the universal ribosomal protein uS3 family. In terms of assembly, part of the 30S ribosomal subunit. Forms a tight complex with proteins S10 and S14.

Binds the lower part of the 30S subunit head. Binds mRNA in the 70S ribosome, positioning it for translation. The chain is Small ribosomal subunit protein uS3 from Verminephrobacter eiseniae (strain EF01-2).